Consider the following 215-residue polypeptide: [PSI+] inducibility protein 3 (215 aa).

The residue at position 2 (Ser2) is an N-acetylserine. Residues Ser52 and Ser55 each carry the phosphoserine modification. Positions 54-113 constitute an SH3 domain; the sequence is ASLEYVEALYQFDPQQDGDLGLKPGDKVQLLEKLSPEWYKGSCNGRTGIFPANYVKPAFS. Lys80 is covalently cross-linked (Glycyl lysine isopeptide (Lys-Gly) (interchain with G-Cter in ubiquitin)). Positions 114-189 are disordered; the sequence is GSNGPSNLPP…HQSSHSHLKS (76 aa). Residues 124–127 carry the PY motif motif; that stretch reads PPQY.

The protein belongs to the LSB1 family. In terms of assembly, interacts with LAS17, RSP5 and SUP35. Post-translationally, ubiquitinated by RSP5. Ubiquitination reduces the protein abundance and its prion-inducing ability.

Its subcellular location is the cytoplasm. The protein resides in the nucleus. It is found in the cytoskeleton. The protein localises to the actin patch. Overproduction promotes the de novo induction of the [PSI+] prion form of SUP35. The prion-inducing effect depends on the association with the actin cytoskeleton. Also implicated in prion maintenance during heat stress. This chain is [PSI+] inducibility protein 3 (PIN3), found in Saccharomyces cerevisiae (strain ATCC 204508 / S288c) (Baker's yeast).